The primary structure comprises 115 residues: Autophagy-related protein 8i (115 aa).

G115 carries Phosphatidylethanolamine amidated glycine lipidation.

The protein belongs to the ATG8 family. Interacts with ATG4. Interacts with NBR1. Gly-115 forms then a thioester bond with the 'Cys-558' of ATG7 (E1-like activating enzyme) before being transferred to the 'Cys-258' of ATG3 (the specific E2 conjugating enzyme), in order to be finally amidated with phosphatidylethanolamine. This lipid modification anchors ATG8 to autophagosomes. In terms of tissue distribution, constitutively expressed.

It localises to the cytoplasmic vesicle. Its subcellular location is the autophagosome membrane. The protein resides in the vacuole membrane. It is found in the cytoplasm. The protein localises to the cytoskeleton. Functionally, ubiquitin-like modifier involved in autophagosomes formation. May mediate the delivery of the autophagosomes to the vacuole via the microtubule cytoskeleton. The polypeptide is Autophagy-related protein 8i (ATG8I) (Arabidopsis thaliana (Mouse-ear cress)).